The primary structure comprises 170 residues: Photosystem I assembly protein Ycf3 (170 aa).

3 TPR repeats span residues 35–68 (AFTH…EIDP), 72–105 (SYIL…NSSL), and 120–153 (GEQA…APSN).

This sequence belongs to the Ycf3 family.

It localises to the plastid. The protein resides in the chloroplast thylakoid membrane. Functionally, essential for the assembly of the photosystem I (PSI) complex. May act as a chaperone-like factor to guide the assembly of the PSI subunits. The protein is Photosystem I assembly protein Ycf3 of Anthoceros angustus (Hornwort).